The following is a 423-amino-acid chain: Histidine--tRNA ligase (423 aa).

Belongs to the class-II aminoacyl-tRNA synthetase family. Homodimer.

The protein resides in the cytoplasm. It carries out the reaction tRNA(His) + L-histidine + ATP = L-histidyl-tRNA(His) + AMP + diphosphate + H(+). The polypeptide is Histidine--tRNA ligase (Orientia tsutsugamushi (strain Ikeda) (Rickettsia tsutsugamushi)).